Reading from the N-terminus, the 403-residue chain is Signal-transducing adaptor protein 2 (403 aa).

The PH domain maps to 18–130; that stretch reads PSHYYESFLE…VPTDLTLLPG (113 aa). The residue at position 22 (Y22) is a Phosphotyrosine; by SRC. One can recognise an SH2 domain in the interval 133–248; it reads YMMSEVLAKE…KALVPFLLDE (116 aa). Y250 is subject to Phosphotyrosine; by PTK6. The interval 270 to 308 is disordered; that stretch reads APSAPGPGPAPCTGGPKPLSPASSQDKLPPLPPLPNQEE. Y310 is modified (phosphotyrosine). Y322 bears the Phosphotyrosine; by SRC mark. The segment at 331 to 374 is disordered; sequence SWPVILKPKKLPKPPAKLPKPPVGPKPEPKVFNGGLGRKLPVSS. The segment covering 343 to 356 has biased composition (pro residues); sequence KPPAKLPKPPVGPK. Residues 382-402 adopt a coiled-coil conformation; it reads AGLADMTAELQKKLEKRRALE.

Interacts with PTK6 and CSF1R. Phosphorylated on tyrosine. Tyr-250 may be important for interaction with kinases. Phosphorylated by PTK6 at Tyr-250 modulates PTK6-mediated STAT3 activation. Tyr-22 and Tyr-322 appears to be phosphorylated by SRC. Widely expressed.

The protein resides in the cytoplasm. Substrate of protein kinase PTK6. May play a regulatory role in the acute-phase response in systemic inflammation and may modulate STAT3 activity. The protein is Signal-transducing adaptor protein 2 (STAP2) of Homo sapiens (Human).